Reading from the N-terminus, the 179-residue chain is Peptidyl-tRNA hydrolase (179 aa).

Tyrosine 14 is a binding site for tRNA. The active-site Proton acceptor is the histidine 19. 3 residues coordinate tRNA: tyrosine 60, asparagine 62, and asparagine 108.

This sequence belongs to the PTH family. Monomer.

It localises to the cytoplasm. The catalysed reaction is an N-acyl-L-alpha-aminoacyl-tRNA + H2O = an N-acyl-L-amino acid + a tRNA + H(+). Functionally, hydrolyzes ribosome-free peptidyl-tRNAs (with 1 or more amino acids incorporated), which drop off the ribosome during protein synthesis, or as a result of ribosome stalling. In terms of biological role, catalyzes the release of premature peptidyl moieties from peptidyl-tRNA molecules trapped in stalled 50S ribosomal subunits, and thus maintains levels of free tRNAs and 50S ribosomes. The polypeptide is Peptidyl-tRNA hydrolase (Mycoplasma mobile (strain ATCC 43663 / 163K / NCTC 11711) (Mesomycoplasma mobile)).